The primary structure comprises 50 residues: Penaeidin-1 (50 aa).

3 cysteine pairs are disulfide-bonded: Cys-25–Cys-38, Cys-27–Cys-45, and Cys-39–Cys-46.

In terms of tissue distribution, higher expression in hemocytes and to a lesser extent in heart, testis, gills, intestine, lymphoid organ and hepatopancreas. Traces in eyes and subcuticular epithelium. Not present in the brain.

It is found in the cytoplasmic granule. Functionally, antibacterial activity against M.luteus and E.coli bacteria. Antifungal activity against N.crassa and F.oxysporum. Presents chitin-binding activity. This Penaeus vannamei (Whiteleg shrimp) protein is Penaeidin-1.